A 227-amino-acid polypeptide reads, in one-letter code: uncharacterized protein (227 aa).

This sequence to ORF5 in pFZ1.

This is an uncharacterized protein from Methanothermobacter thermautotrophicus (Methanobacterium thermoformicicum).